Here is a 430-residue protein sequence, read N- to C-terminus: Glutamyl-tRNA reductase (430 aa).

Substrate is bound by residues T50–R53, S108, E113–Q115, and Q119. C51 functions as the Nucleophile in the catalytic mechanism. An NADP(+)-binding site is contributed by G188–A193.

It belongs to the glutamyl-tRNA reductase family. In terms of assembly, homodimer.

The catalysed reaction is (S)-4-amino-5-oxopentanoate + tRNA(Glu) + NADP(+) = L-glutamyl-tRNA(Glu) + NADPH + H(+). The protein operates within porphyrin-containing compound metabolism; protoporphyrin-IX biosynthesis; 5-aminolevulinate from L-glutamyl-tRNA(Glu): step 1/2. Functionally, catalyzes the NADPH-dependent reduction of glutamyl-tRNA(Glu) to glutamate 1-semialdehyde (GSA). The chain is Glutamyl-tRNA reductase from Desulfovibrio desulfuricans (strain ATCC 27774 / DSM 6949 / MB).